A 235-amino-acid polypeptide reads, in one-letter code: Ribitol-5-phosphate cytidylyltransferase (235 aa).

CTP-binding positions include leucine 7 to glycine 10, glycine 82 to serine 88, and serine 113.

It belongs to the IspD/TarI cytidylyltransferase family. TarI subfamily.

It carries out the reaction D-ribitol 5-phosphate + CTP + H(+) = CDP-L-ribitol + diphosphate. It participates in cell wall biogenesis; poly(ribitol phosphate) teichoic acid biosynthesis. Functionally, catalyzes the transfer of the cytidylyl group of CTP to D-ribitol 5-phosphate. This chain is Ribitol-5-phosphate cytidylyltransferase, found in Streptococcus pneumoniae (strain ATCC 700669 / Spain 23F-1).